Consider the following 419-residue polypeptide: Prolyl hydroxylase EGLN2 (419 aa).

Composition is skewed to low complexity over residues 1–18 (MDSPCQPQALNQALPQLP) and 64–73 (TTATATTTTA). 2 disordered regions span residues 1 to 89 (MDSP…GELW) and 108 to 181 (AAQG…REEV). Residues 89 to 134 (WPLQSEGAAALVTKECQRLAAQGARPEAPKRKWAKDGGDAPSPSKR) carry the Bipartite nuclear localization signal motif. Positions 115-126 (EAPKRKWAKDGG) are enriched in basic and acidic residues. Ser130 carries the post-translational modification Phosphoserine. The span at 154–174 (SGASNSSSSSSNTTSSSGEAS) shows a compositional bias: low complexity. The segment at 237–247 (VSQRAIPPRSI) is beta(2)beta(3) 'finger-like' loop. The 99-residue stretch at 290–388 (GRTKAMVACY…RYAITVWYFD (99 aa)) folds into the Fe2OG dioxygenase domain. Residues His309, Asp311, and His370 each contribute to the Fe cation site. Arg379 serves as a coordination point for 2-oxoglutarate.

In terms of assembly, interacts with E3 ligase SIAH2. Interacts with LIMD1, WTIP and AJUBA. The cofactor is Fe(2+). L-ascorbate serves as cofactor. Ubiquitinated by SIAH1 and/or SIAH2 in response to the unfolded protein response (UPR), leading to its degradation. In terms of tissue distribution, highly expressed in testis, expression was also detected in the heart brain, liver kidney and lung. Expression was lowest in spleen and skeletal muscle. Constitutively expressed during differentiation of C2C12 skeletal myocytes.

It is found in the nucleus. The enzyme catalyses L-prolyl-[protein] + 2-oxoglutarate + O2 = trans-4-hydroxy-L-prolyl-[protein] + succinate + CO2. It catalyses the reaction L-prolyl-[hypoxia-inducible factor alpha subunit] + 2-oxoglutarate + O2 = trans-4-hydroxy-L-prolyl-[hypoxia-inducible factor alpha subunit] + succinate + CO2. Prolyl hydroxylase that mediates hydroxylation of proline residues in target proteins, such as ATF4, IKBKB, CEP192 and HIF1A. Target proteins are preferentially recognized via a LXXLAP motif. Cellular oxygen sensor that catalyzes, under normoxic conditions, the post-translational formation of 4-hydroxyproline in hypoxia-inducible factor (HIF) alpha proteins. Hydroxylates a specific proline found in each of the oxygen-dependent degradation (ODD) domains (N-terminal, NODD, and C-terminal, CODD) of HIF1A. Also hydroxylates HIF2A. Has a preference for the CODD site for both HIF1A and HIF2A. Hydroxylated HIFs are then targeted for proteasomal degradation via the von Hippel-Lindau ubiquitination complex. Under hypoxic conditions, the hydroxylation reaction is attenuated allowing HIFs to escape degradation resulting in their translocation to the nucleus, heterodimerization with HIF1B, and increased expression of hypoxy-inducible genes. EGLN2 is involved in regulating hypoxia tolerance and apoptosis in cardiac and skeletal muscle. Also regulates susceptibility to normoxic oxidative neuronal death. Links oxygen sensing to cell cycle and primary cilia formation by hydroxylating the critical centrosome component CEP192 which promotes its ubiquitination and subsequent proteasomal degradation. Hydroxylates IKBKB, mediating NF-kappa-B activation in hypoxic conditions. Also mediates hydroxylation of ATF4, leading to decreased protein stability of ATF4. This chain is Prolyl hydroxylase EGLN2, found in Mus musculus (Mouse).